The primary structure comprises 130 residues: Small ribosomal subunit protein uS9 (130 aa).

It belongs to the universal ribosomal protein uS9 family.

This chain is Small ribosomal subunit protein uS9, found in Nitratidesulfovibrio vulgaris (strain ATCC 29579 / DSM 644 / CCUG 34227 / NCIMB 8303 / VKM B-1760 / Hildenborough) (Desulfovibrio vulgaris).